We begin with the raw amino-acid sequence, 247 residues long: Fumarate reductase iron-sulfur subunit (247 aa).

An a menaquinone-binding site is contributed by Tyr-12. Positions 14–94 (PEIESAPTFQ…PGPVRVEPMR (81 aa)) constitute a 2Fe-2S ferredoxin-type domain. Residues Cys-56, Cys-61, and Cys-76 each coordinate [2Fe-2S] cluster. The 30-residue stretch at 140–169 (LDAFKQFSMCINCMLCYSACPVYALDPDFL) folds into the 4Fe-4S ferredoxin-type domain. [4Fe-4S] cluster is bound by residues Cys-149, Cys-152, and Cys-155. Cys-159, Cys-205, and Cys-211 together coordinate [3Fe-4S] cluster. Cys-215 provides a ligand contact to [4Fe-4S] cluster. A menaquinone is bound at residue 226 to 229 (QRYK).

The protein belongs to the succinate dehydrogenase/fumarate reductase iron-sulfur protein family. In terms of assembly, fumarate dehydrogenase forms part of an enzyme complex containing four subunits: a flavoprotein, an iron-sulfur, and two hydrophobic anchor proteins. [2Fe-2S] cluster is required as a cofactor. Requires [3Fe-4S] cluster as cofactor. [4Fe-4S] cluster serves as cofactor.

It is found in the cell membrane. The enzyme catalyses a quinone + succinate = fumarate + a quinol. It catalyses the reaction a menaquinone + succinate = a menaquinol + fumarate. The chain is Fumarate reductase iron-sulfur subunit (frdB) from Mycobacterium tuberculosis (strain CDC 1551 / Oshkosh).